We begin with the raw amino-acid sequence, 35 residues long: Kappa-theraphotoxin-Tb1b (35 aa).

Cystine bridges form between cysteine 3-cysteine 18, cysteine 10-cysteine 23, and cysteine 17-cysteine 30.

The protein belongs to the neurotoxin 10 (Hwtx-1) family. 58 subfamily. In terms of assembly, monomer. In terms of tissue distribution, expressed by the venom gland.

It localises to the secreted. Low-affinity blocker of Kv4.2/KCND2 voltage-gated potassium channels. Is presumed to shift the voltage-dependence of channel activation to more depolarized potentials and to bind to the S3-S4 linker region of the voltage sensor domain. In Theraphosa blondi (Goliath birdeating spider), this protein is Kappa-theraphotoxin-Tb1b.